The following is a 699-amino-acid chain: Elongation factor G (699 aa).

Residues 8–283 enclose the tr-type G domain; it reads EQIRNIGICA…AIVDFLPSPI (276 aa). GTP is bound by residues 17–24, 81–85, and 135–138; these read AHIDAGKT, DTPGH, and NKMD.

This sequence belongs to the TRAFAC class translation factor GTPase superfamily. Classic translation factor GTPase family. EF-G/EF-2 subfamily.

Its subcellular location is the cytoplasm. Functionally, catalyzes the GTP-dependent ribosomal translocation step during translation elongation. During this step, the ribosome changes from the pre-translocational (PRE) to the post-translocational (POST) state as the newly formed A-site-bound peptidyl-tRNA and P-site-bound deacylated tRNA move to the P and E sites, respectively. Catalyzes the coordinated movement of the two tRNA molecules, the mRNA and conformational changes in the ribosome. The sequence is that of Elongation factor G (fusA) from Rickettsia prowazekii (strain Madrid E).